We begin with the raw amino-acid sequence, 104 residues long: NADH-quinone oxidoreductase subunit K (104 aa).

Helical transmembrane passes span 4–24, 31–51, and 67–87; these read VPAS…LFGA, VIVL…LVAF, and LFTM…LIAL.

This sequence belongs to the complex I subunit 4L family. In terms of assembly, NDH-1 is composed of 14 different subunits. Subunits NuoA, H, J, K, L, M, N constitute the membrane sector of the complex.

It localises to the cell membrane. The catalysed reaction is a quinone + NADH + 5 H(+)(in) = a quinol + NAD(+) + 4 H(+)(out). In terms of biological role, NDH-1 shuttles electrons from NADH, via FMN and iron-sulfur (Fe-S) centers, to quinones in the respiratory chain. The immediate electron acceptor for the enzyme in this species is believed to be a menaquinone. Couples the redox reaction to proton translocation (for every two electrons transferred, four hydrogen ions are translocated across the cytoplasmic membrane), and thus conserves the redox energy in a proton gradient. The chain is NADH-quinone oxidoreductase subunit K from Bacillus cereus (strain AH820).